The following is a 31-amino-acid chain: U8-ctenitoxin-Co1a (31 aa).

2 disulfides stabilise this stretch: C4/C18 and C11/C24.

As to expression, expressed by the venom gland.

It is found in the secreted. Functionally, blocks voltage-gated sodium channels (Nav). This chain is U8-ctenitoxin-Co1a, found in Ctenus ornatus (Brazilian spider).